We begin with the raw amino-acid sequence, 1025 residues long: Dihydropyrimidine dehydrogenase [NADP(+)] (1025 aa).

Residues 1–3 (MAP) constitute a propeptide that is removed on maturation. The 4Fe-4S ferredoxin-type 1 domain maps to 69 to 100 (ERGALREAMRCLKCADAPCQKSCPTHLDIKSF). Residues cysteine 79, cysteine 82, cysteine 87, and cysteine 91 each coordinate [4Fe-4S] cluster. Valine 129 contacts FAD. The [4Fe-4S] cluster site is built by cysteine 130, cysteine 136, cysteine 140, and glutamine 156. FAD contacts are provided by residues 194–198 (GAGPA), 218–226 (EKQEYVGGL), arginine 235, and leucine 261. NADP(+)-binding positions include 340–343 (AGDT), 364–365 (RK), and arginine 371. Lysine 384 carries the N6-acetyllysine modification. Residues 437-439 (AFG) and 481-487 (DIVGMAN) each bind NADP(+). Position 480-489 (480-489 (GDIVGMANTT)) interacts with FAD. Residues serine 550 and 574–575 (KT) each bind FMN. Substrate is bound by residues asparagine 609 and 668-670 (NLS). Cysteine 671 functions as the Proton acceptor in the catalytic mechanism. FMN is bound at residue lysine 709. 736-737 (NT) contributes to the substrate binding site. FMN is bound by residues glycine 767, 793–795 (TGG), and 816–817 (CS). 4Fe-4S ferredoxin-type domains lie at 944-976 (VVAV…FDPE) and 978-1007 (HLPT…MVSR). 8 residues coordinate [4Fe-4S] cluster: cysteine 953, cysteine 956, cysteine 959, cysteine 963, cysteine 986, cysteine 989, cysteine 992, and cysteine 996.

Belongs to the dihydropyrimidine dehydrogenase family. As to quaternary structure, homodimer. FAD is required as a cofactor. Requires FMN as cofactor. [4Fe-4S] cluster serves as cofactor.

The protein localises to the cytoplasm. The enzyme catalyses 5,6-dihydrouracil + NADP(+) = uracil + NADPH + H(+). It carries out the reaction 5,6-dihydrothymine + NADP(+) = thymine + NADPH + H(+). It participates in amino-acid biosynthesis; beta-alanine biosynthesis. With respect to regulation, inactivated by 5-iodouracil. In terms of biological role, involved in pyrimidine base degradation. Catalyzes the reduction of uracil and thymine. The protein is Dihydropyrimidine dehydrogenase [NADP(+)] (DPYD) of Sus scrofa (Pig).